The chain runs to 574 residues: NEDD4-binding protein 2-like 2 (574 aa).

Disordered regions lie at residues 82 to 110 (HKEM…LAPA), 127 to 161 (YKPP…QKFN), 182 to 204 (ENEN…QTLS), and 542 to 574 (TQKS…TDDY). Composition is skewed to basic and acidic residues over residues 129-141 (PPEK…RKNE) and 149-161 (DSKR…QKFN). Residues 162 to 196 (SKKLEIDTELSQFYKEIEELENENEASQGSCKEPE) adopt a coiled-coil conformation. Positions 563–574 (GSHSQVSITDDY) are enriched in polar residues.

This chain is NEDD4-binding protein 2-like 2 (N4bp2l2), found in Rattus norvegicus (Rat).